Consider the following 142-residue polypeptide: Ovocleidin-17 (142 aa).

Disulfide bonds link Cys5–Cys16, Cys33–Cys138, and Cys113–Cys130. The C-type lectin domain occupies 12–139; that stretch reads TPGGCLGFFS…CTERNAFVCK (128 aa). Residue Asn59 is glycosylated (N-linked (GlcNAc...) asparagine). 2 positions are modified to phosphoserine: Ser61 and Ser67.

In terms of tissue distribution, expressed in the shell gland mucosa. Not detected in hen liver, magnum, isthmus, cartilage, bone or in egg white or yolk.

It is found in the secreted. The protein localises to the extracellular space. The protein resides in the extracellular matrix. Its function is as follows. May form proteinaceous networks during the construction of the eggshell which then may control the deposition of the mineral phase. The chain is Ovocleidin-17 from Gallus gallus (Chicken).